Reading from the N-terminus, the 200-residue chain is NADH-quinone oxidoreductase subunit C (200 aa).

Belongs to the complex I 30 kDa subunit family. As to quaternary structure, NDH-1 is composed of 14 different subunits. Subunits NuoB, C, D, E, F, and G constitute the peripheral sector of the complex.

The protein resides in the cell inner membrane. The enzyme catalyses a quinone + NADH + 5 H(+)(in) = a quinol + NAD(+) + 4 H(+)(out). NDH-1 shuttles electrons from NADH, via FMN and iron-sulfur (Fe-S) centers, to quinones in the respiratory chain. The immediate electron acceptor for the enzyme in this species is believed to be ubiquinone. Couples the redox reaction to proton translocation (for every two electrons transferred, four hydrogen ions are translocated across the cytoplasmic membrane), and thus conserves the redox energy in a proton gradient. The polypeptide is NADH-quinone oxidoreductase subunit C (Burkholderia mallei (strain NCTC 10247)).